A 238-amino-acid chain; its full sequence is Zinc import ATP-binding protein ZnuC (238 aa).

The 216-residue stretch at 5–220 folds into the ABC transporter domain; it reads ITLKNIHVSF…LEFISIFGLK (216 aa). Residue 37-44 coordinates ATP; that stretch reads GPNGAGKS.

The protein belongs to the ABC transporter superfamily. Zinc importer (TC 3.A.1.15.5) family. As to quaternary structure, the complex is composed of two ATP-binding proteins (ZnuC), two transmembrane proteins (ZnuB) and a solute-binding protein (ZnuA).

It localises to the cell inner membrane. It carries out the reaction Zn(2+)(out) + ATP(in) + H2O(in) = Zn(2+)(in) + ADP(in) + phosphate(in) + H(+)(in). Functionally, part of the ABC transporter complex ZnuABC involved in zinc import. Responsible for energy coupling to the transport system. This is Zinc import ATP-binding protein ZnuC from Buchnera aphidicola subsp. Schizaphis graminum (strain Sg).